The primary structure comprises 963 residues: Importin-13 (963 aa).

20 HEAT repeats span residues Glu-24 to Val-54, Pro-56 to Arg-88, Thr-95 to Met-135, Ala-142 to Thr-179, Leu-194 to Gln-231, Leu-236 to Ser-268, Val-276 to Asp-325, Trp-330 to Leu-372, Glu-375 to Leu-438, Ala-440 to Ile-476, Val-487 to Asp-522, Pro-524 to Cys-558, Leu-562 to Ala-600, Val-603 to Phe-648, Pro-676 to Leu-716, Phe-720 to Phe-754, Phe-761 to Arg-803, Val-815 to Leu-845, Glu-860 to Asn-893, and Phe-897 to Leu-931. Residues Ala-45 to Arg-111 enclose the Importin N-terminal domain.

The protein belongs to the importin beta family. Interacts with UBC9, RAN, RBM8A, eIF-1A and PAX6.

It localises to the cytoplasm. The protein localises to the nucleus. Functions in nuclear protein import as nuclear transport receptor. Serves as receptor for nuclear localization signals (NLS) in cargo substrates. Is thought to mediate docking of the importin/substrate complex to the nuclear pore complex (NPC) through binding to nucleoporin and the complex is subsequently translocated through the pore by an energy requiring, Ran-dependent mechanism. At the nucleoplasmic side of the NPC, Ran binds to the importin, the importin/substrate complex dissociates and importin is re-exported from the nucleus to the cytoplasm where GTP hydrolysis releases Ran. The directionality of nuclear import is thought to be conferred by an asymmetric distribution of the GTP- and GDP-bound forms of Ran between the cytoplasm and nucleus. Mediates the nuclear import of UBC9, the RBM8A/MAGOH complex, PAX6 and probably other members of the paired homeobox family. Also mediates nuclear export of eIF-1A, and the cytoplasmic release of eIF-1A is triggered by the loading of import substrates onto IPO13. The chain is Importin-13 (IPO13) from Pongo abelii (Sumatran orangutan).